Reading from the N-terminus, the 193-residue chain is Holliday junction branch migration complex subunit RuvA (193 aa).

The tract at residues 1-64 is domain I; that stretch reads MIGRIAGILL…EDAHLLYGFL (64 aa). Residues 65–139 are domain II; it reads TPQERTTFRE…GKLGADLGAL (75 aa). Residues 139-143 are flexible linker; the sequence is LAGAA. Residues 144–193 form a domain III region; the sequence is SQSDHATDILNALVALGYSEKEGLAAIKNVPAGTGVSEGIKLALKALSKV.

This sequence belongs to the RuvA family. In terms of assembly, homotetramer. Forms an RuvA(8)-RuvB(12)-Holliday junction (HJ) complex. HJ DNA is sandwiched between 2 RuvA tetramers; dsDNA enters through RuvA and exits via RuvB. An RuvB hexamer assembles on each DNA strand where it exits the tetramer. Each RuvB hexamer is contacted by two RuvA subunits (via domain III) on 2 adjacent RuvB subunits; this complex drives branch migration. In the full resolvosome a probable DNA-RuvA(4)-RuvB(12)-RuvC(2) complex forms which resolves the HJ.

It is found in the cytoplasm. In terms of biological role, the RuvA-RuvB-RuvC complex processes Holliday junction (HJ) DNA during genetic recombination and DNA repair, while the RuvA-RuvB complex plays an important role in the rescue of blocked DNA replication forks via replication fork reversal (RFR). RuvA specifically binds to HJ cruciform DNA, conferring on it an open structure. The RuvB hexamer acts as an ATP-dependent pump, pulling dsDNA into and through the RuvAB complex. HJ branch migration allows RuvC to scan DNA until it finds its consensus sequence, where it cleaves and resolves the cruciform DNA. The protein is Holliday junction branch migration complex subunit RuvA of Burkholderia ambifaria (strain MC40-6).